The primary structure comprises 201 residues: Superoxide dismutase [Mn/Fe] (201 aa).

Positions 27, 81, 162, and 166 each coordinate Fe(3+). 4 residues coordinate Mn(2+): His27, His81, Asp162, and His166.

Belongs to the iron/manganese superoxide dismutase family. In terms of assembly, homodimer. The cofactor is Mn(2+). Requires Fe(3+) as cofactor.

It catalyses the reaction 2 superoxide + 2 H(+) = H2O2 + O2. In terms of biological role, destroys superoxide anion radicals which are normally produced within the cells and which are toxic to biological systems. Catalyzes the dismutation of superoxide anion radicals into O2 and H2O2 by successive reduction and oxidation of the transition metal ion at the active site. The polypeptide is Superoxide dismutase [Mn/Fe] (sodA) (Staphylococcus carnosus).